Here is a 580-residue protein sequence, read N- to C-terminus: MVQLKAEIDAGPLDNSISIFSLIENGLRQKPDAPAVICLHESADALDHLIVPSNPRERERGPADGECLMLSYRQLHHTAVKLAVGFRAKGVAPGSTLLMLVPNGGHYALLLWACILARLTFISVDPAEVLDDLKSQRIASILQETRPEVVVIPSVIEAKAMDGILGATSITELLKISLKKVQEPGWERMTKLVSDGIANPLDMDALVEEARCDDPDRLYSIMFTSGTSERPKGCPLRVGGAAHMVRSWSWLINQINSSYALQQAHNSRGIAPAQTVQTWAEGGAVVMTGRGFDVDDMLDAIRLNYASFVVLTPAMAHALAAHLETHQIDMSSVKTVQVGGDAVTKNVLVKCNSLFPHADVCINHGMTEGGACFEWSFLDIAPSDVPFFGQICPVGKTARGAAVRIWDTEREEIAERGRPGQLHLSSESIIRHYLHGESAGSFYQQGGQRWFITGDIAMMTDEGTVYILGRSKDTIVSDGHLVMPFVIESCLEDLTGSQASVIAIPHPVYGQVPYAVLQTLKQVDDHAIQDQVVRLLGTDYQLAGINSLEALGMTTVPVNDTRKIIKSQIKEAVMRYIDGK.

This sequence belongs to the ATP-dependent AMP-binding enzyme family.

Its pathway is secondary metabolite biosynthesis. Its function is as follows. Acyl--CoA ligase; part of the gene cluster that mediates the biosynthesis of dibenzodioxocinones such as pestalotiollide B, a novel class of inhibitors against cholesterol ester transfer protein (CEPT). The biosynthesis initiates from condensation of acetate and malonate units catalyzed by the non-reducing PKS pks8/GME11356. Pks8/GME11356 lacks a thioesterase (TE) domain, which is important to the cyclizing of the third ring of atrochrysone carboxylic acid, and the esterase GME11355 might play the role of TE and catalyzes the cyclization reaction of the C ring. The lactamase-like protein GME11357 (or other beta-lactamases in Pestalotiopsis microspora) probably hydrolyzes the thioester bond between the ACP of pks8/GME11356 and the intermediate to release atrochrysone carboxylic acid, which is spontaneously dehydrates to form endocrocin anthrone. Endocrocin anthrone is further converted to emodin via the endocrocin intermediate. Emodin is then oxidized by several enzymes such as the Baeyer-Villiger oxidase GME11358, the oxidoreductase GME11367, the short chain dehydrogenase/reductase GME11373, as well as by other oxidoreductases from the cluster, to modify the A and C rings and open the B ring, and finally yield monodictyphenone. The prenyltransferase GME11375 may catalyze the addition reaction between the C5 side chains and the carbon bone of dibenzodioxocinones. The remaining biochemical reactions to the final product dibenzodioxocinones should be methylation catalyzed by methyltransferase GME11366 and reduction and lactonization reaction catalyzed by a series of oxidordeuctases. This Pestalotiopsis microspora protein is Acyl--CoA ligase GME11374.